A 372-amino-acid chain; its full sequence is tRNA-specific 2-thiouridylase MnmA (372 aa).

Residues 16–23 (GMSGGVDS) and methionine 42 each bind ATP. The interaction with target base in tRNA stretch occupies residues 102 to 104 (NPD). Residue cysteine 107 is the Nucleophile of the active site. A disulfide bridge links cysteine 107 with cysteine 205. Glycine 132 provides a ligand contact to ATP. The interval 155–157 (KDQ) is interaction with tRNA. Cysteine 205 serves as the catalytic Cysteine persulfide intermediate. Positions 317–318 (RY) are interaction with tRNA.

It belongs to the MnmA/TRMU family.

The protein localises to the cytoplasm. The catalysed reaction is S-sulfanyl-L-cysteinyl-[protein] + uridine(34) in tRNA + AH2 + ATP = 2-thiouridine(34) in tRNA + L-cysteinyl-[protein] + A + AMP + diphosphate + H(+). Catalyzes the 2-thiolation of uridine at the wobble position (U34) of tRNA, leading to the formation of s(2)U34. The sequence is that of tRNA-specific 2-thiouridylase MnmA from Shewanella frigidimarina (strain NCIMB 400).